The chain runs to 61 residues: Photosystem II reaction center protein K (61 aa).

Residues 1–24 (MLNIFSLICICINSALHSSSFFFA) constitute a propeptide that is removed on maturation. The chain crosses the membrane as a helical span at residues 40–60 (MPVIPVLFFLLALVWQAAVSF).

Belongs to the PsbK family. PSII is composed of 1 copy each of membrane proteins PsbA, PsbB, PsbC, PsbD, PsbE, PsbF, PsbH, PsbI, PsbJ, PsbK, PsbL, PsbM, PsbT, PsbX, PsbY, PsbZ, Psb30/Ycf12, at least 3 peripheral proteins of the oxygen-evolving complex and a large number of cofactors. It forms dimeric complexes.

The protein localises to the plastid. It is found in the chloroplast thylakoid membrane. In terms of biological role, one of the components of the core complex of photosystem II (PSII). PSII is a light-driven water:plastoquinone oxidoreductase that uses light energy to abstract electrons from H(2)O, generating O(2) and a proton gradient subsequently used for ATP formation. It consists of a core antenna complex that captures photons, and an electron transfer chain that converts photonic excitation into a charge separation. This is Photosystem II reaction center protein K from Liriodendron tulipifera (Tuliptree).